The chain runs to 275 residues: uncharacterized protein (275 aa).

NAD(+) contacts are provided by residues 20 to 22 (RAQ), 41 to 42 (DI), 80 to 81 (DI), and asparagine 107. Serine 160 is a binding site for substrate. Catalysis depends on tyrosine 173, which acts as the Proton acceptor. NAD(+) is bound by residues lysine 177 and 206-208 (VDT).

It belongs to the short-chain dehydrogenases/reductases (SDR) family.

This is an uncharacterized protein from Mycobacterium tuberculosis (strain CDC 1551 / Oshkosh).